Reading from the N-terminus, the 258-residue chain is Acyl-[acyl-carrier-protein]--UDP-N-acetylglucosamine O-acyltransferase (258 aa).

The protein belongs to the transferase hexapeptide repeat family. LpxA subfamily. In terms of assembly, homotrimer.

It localises to the cytoplasm. It carries out the reaction a (3R)-hydroxyacyl-[ACP] + UDP-N-acetyl-alpha-D-glucosamine = a UDP-3-O-[(3R)-3-hydroxyacyl]-N-acetyl-alpha-D-glucosamine + holo-[ACP]. Its pathway is glycolipid biosynthesis; lipid IV(A) biosynthesis; lipid IV(A) from (3R)-3-hydroxytetradecanoyl-[acyl-carrier-protein] and UDP-N-acetyl-alpha-D-glucosamine: step 1/6. Involved in the biosynthesis of lipid A, a phosphorylated glycolipid that anchors the lipopolysaccharide to the outer membrane of the cell. The polypeptide is Acyl-[acyl-carrier-protein]--UDP-N-acetylglucosamine O-acyltransferase (Neisseria meningitidis serogroup A / serotype 4A (strain DSM 15465 / Z2491)).